Consider the following 384-residue polypeptide: Chaperone protein DnaJ (384 aa).

The J domain occupies 5-70 (DFYEVLGVSK…DKKAAYDRYG (66 aa)). Residues 143-221 (GAQKTITVPG…CHGSGRIEKE (79 aa)) form a CR-type zinc finger. Residues Cys156, Cys159, Cys173, Cys176, Cys195, Cys198, Cys209, and Cys212 each coordinate Zn(2+). CXXCXGXG motif repeat units lie at residues 156–163 (CGSCNGTG), 173–180 (CPTCSGLG), 195–202 (CPTCGGQG), and 209–216 (CRVCHGSG).

The protein belongs to the DnaJ family. In terms of assembly, homodimer. Zn(2+) serves as cofactor.

It localises to the cytoplasm. In terms of biological role, participates actively in the response to hyperosmotic and heat shock by preventing the aggregation of stress-denatured proteins and by disaggregating proteins, also in an autonomous, DnaK-independent fashion. Unfolded proteins bind initially to DnaJ; upon interaction with the DnaJ-bound protein, DnaK hydrolyzes its bound ATP, resulting in the formation of a stable complex. GrpE releases ADP from DnaK; ATP binding to DnaK triggers the release of the substrate protein, thus completing the reaction cycle. Several rounds of ATP-dependent interactions between DnaJ, DnaK and GrpE are required for fully efficient folding. Also involved, together with DnaK and GrpE, in the DNA replication of plasmids through activation of initiation proteins. This is Chaperone protein DnaJ from Rhodobacter capsulatus (Rhodopseudomonas capsulata).